The chain runs to 261 residues: Cytochrome c oxidase subunit 3 (261 aa).

The Mitochondrial matrix portion of the chain corresponds to 1-15 (MTHQTHAYHMVNPSP). A helical transmembrane segment spans residues 16–34 (WPLTGAMSALLLTSGLIMW). The Mitochondrial intermembrane segment spans residues 35–40 (FHFNSY). Residues 41 to 66 (TLLLLGLLTNLISSYQWWRDIVREGT) form a helical membrane-spanning segment. The Mitochondrial matrix portion of the chain corresponds to 67-72 (YQGHHT). A helical membrane pass occupies residues 73–105 (KIVQKGLRYGMILFIISEVFFFLGFFWAFYHSS). The Mitochondrial intermembrane segment spans residues 106–128 (LAPTPELGGCWPPTGISPLNPLE). The chain crosses the membrane as a helical span at residues 129–152 (VPLLNTSILLASGVSITWAHHSLM). The Mitochondrial matrix segment spans residues 153–155 (EGN). A helical transmembrane segment spans residues 156–183 (RKQMLQALTITIALGLYFTALQAMEYYE). Residues 184 to 190 (ASFTISD) lie on the Mitochondrial intermembrane side of the membrane. A helical transmembrane segment spans residues 191–223 (GVYGSTFFVATGFHGLHVIIGTTFLITCLVRQT). Residues 224 to 232 (LYHFTSNHH) lie on the Mitochondrial matrix side of the membrane. The helical transmembrane segment at 233–256 (FGFEAAAWYWHFVDVVWLFLYVSI) threads the bilayer. Residues 257-261 (YWWGS) lie on the Mitochondrial intermembrane side of the membrane.

Belongs to the cytochrome c oxidase subunit 3 family. Component of the cytochrome c oxidase (complex IV, CIV), a multisubunit enzyme composed of 14 subunits. The complex is composed of a catalytic core of 3 subunits MT-CO1, MT-CO2 and MT-CO3, encoded in the mitochondrial DNA, and 11 supernumerary subunits COX4I, COX5A, COX5B, COX6A, COX6B, COX6C, COX7A, COX7B, COX7C, COX8 and NDUFA4, which are encoded in the nuclear genome. The complex exists as a monomer or a dimer and forms supercomplexes (SCs) in the inner mitochondrial membrane with NADH-ubiquinone oxidoreductase (complex I, CI) and ubiquinol-cytochrome c oxidoreductase (cytochrome b-c1 complex, complex III, CIII), resulting in different assemblies (supercomplex SCI(1)III(2)IV(1) and megacomplex MCI(2)III(2)IV(2)).

The protein localises to the mitochondrion inner membrane. The catalysed reaction is 4 Fe(II)-[cytochrome c] + O2 + 8 H(+)(in) = 4 Fe(III)-[cytochrome c] + 2 H2O + 4 H(+)(out). Its function is as follows. Component of the cytochrome c oxidase, the last enzyme in the mitochondrial electron transport chain which drives oxidative phosphorylation. The respiratory chain contains 3 multisubunit complexes succinate dehydrogenase (complex II, CII), ubiquinol-cytochrome c oxidoreductase (cytochrome b-c1 complex, complex III, CIII) and cytochrome c oxidase (complex IV, CIV), that cooperate to transfer electrons derived from NADH and succinate to molecular oxygen, creating an electrochemical gradient over the inner membrane that drives transmembrane transport and the ATP synthase. Cytochrome c oxidase is the component of the respiratory chain that catalyzes the reduction of oxygen to water. Electrons originating from reduced cytochrome c in the intermembrane space (IMS) are transferred via the dinuclear copper A center (CU(A)) of subunit 2 and heme A of subunit 1 to the active site in subunit 1, a binuclear center (BNC) formed by heme A3 and copper B (CU(B)). The BNC reduces molecular oxygen to 2 water molecules using 4 electrons from cytochrome c in the IMS and 4 protons from the mitochondrial matrix. The chain is Cytochrome c oxidase subunit 3 (MT-CO3) from Ornithorhynchus anatinus (Duckbill platypus).